Reading from the N-terminus, the 86-residue chain is Hepcidin-1 (86 aa).

An N-terminal signal peptide occupies residues 1–22; sequence MKAFSVAVVLVIACMFILESTA. Positions 23 to 59 are excised as a propeptide; it reads VPFSEVRTEEVGSFDSPVGEHQQPGGESMHLPEPFRF. Cystine bridges form between Cys68–Cys84, Cys71–Cys74, Cys72–Cys80, and Cys75–Cys83.

The protein belongs to the hepcidin family.

It is found in the secreted. Functionally, seems to act as a signaling molecule involved in the maintenance of iron homeostasis. Seems to be required in conjunction with HFE to regulate both intestinal iron absorption and iron storage in macrophages. May also have antimicrobial activity. The sequence is that of Hepcidin-1 (hamp1) from Salmo salar (Atlantic salmon).